Reading from the N-terminus, the 527-residue chain is Sensory neuron membrane protein 1 (527 aa).

Topologically, residues 1 to 10 are cytoplasmic; it reads MQLQKPLKIG. Residues 11 to 31 form a helical membrane-spanning segment; it reads LGMMGAGLFGIIFGWVLFPVI. The Extracellular portion of the chain corresponds to 32–456; that stretch reads LKSQLKKEMA…LKNQLFIPKR (425 aa). N-linked (GlcNAc...) asparagine glycans are attached at residues N67 and N229. Disulfide bonds link C268–C333, C297–C352, and C335–C341. N440 is a glycosylation site (N-linked (GlcNAc...) asparagine). The helical transmembrane segment at 457 to 477 threads the bilayer; it reads IVSVVKWLLAGVGFVGLVGSL. The Cytoplasmic portion of the chain corresponds to 478-527; that stretch reads VYQFKGKMINFALSPSSAPVTKVNPEINQQNQPKDISIIGESQNPPKVDM.

It belongs to the CD36 family. As to expression, principal component of the olfactory cilia membrane. Localizes to the antennal tissue with two to three fold higher expression in males compared to females.

It is found in the cell membrane. Plays an olfactory role that is not restricted to pheromone sensitivity. The chain is Sensory neuron membrane protein 1 from Ostrinia nubilalis (European corn borer).